A 3974-amino-acid polypeptide reads, in one-letter code: Hybrid PKS-NRPS synthetase 1 (3974 aa).

Residues 5-442 (SQKIAIIGSA…GTNAHCLIES (438 aa)) enclose the Ketosynthase family 3 (KS3) domain. Residues Cys179, His316, and His362 each act as for beta-ketoacyl synthase activity in the active site. Residues 561 to 883 (IFTGQGAQWA…TGILERGLDD (323 aa)) are malonyl-CoA:ACP transacylase (MAT) domain. The tract at residues 954 to 1079 (HPLLGSRLSA…HDSELGIPES (126 aa)) is N-terminal hotdog fold. Residues 954 to 1251 (HPLLGSRLSA…QVESVKLVPV (298 aa)) are dehydratase (DH) domain. Residues 954-1257 (HPLLGSRLSA…LVPVITPDAS (304 aa)) enclose the PKS/mFAS DH domain. His986 acts as the Proton acceptor; for dehydratase activity in catalysis. The C-terminal hotdog fold stretch occupies residues 1107–1257 (TTPISSAKIY…LVPVITPDAS (151 aa)). Asp1165 serves as the catalytic Proton donor; for dehydratase activity. The segment at 1398–1529 (PWNTELRNAI…GYLLLVAKTG (132 aa)) is methyltransferase (MT) domain. Residues 2108-2282 (TYFLAGMTDS…ASIMDTGVVT (175 aa)) form a ketoreductase (KR) domain region. Residues 2492–2516 (AGRSASPGASCSDRSLSTRSDETRS) form a disordered region. Positions 2498–2509 (PGASCSDRSLST) are enriched in polar residues. A condensation (C) domain region spans residues 2560–2994 (APLSPGQAQL…LERLRTSSDQ (435 aa)). Residues 3021–3423 (DAMAEKYFDQ…DGSLILLGRM (403 aa)) are adenylation (A) (KR) domain. The Carrier domain occupies 3537–3613 (SADQLVEAEV…EMAEKMASVR (77 aa)). Ser3573 bears the O-(pantetheine 4'-phosphoryl)serine mark. The reductase (RED) domain stretch occupies residues 3657-3940 (VVLTGAADLL…KLEMGEWIAL (284 aa)).

This sequence in the C-terminal section; belongs to the NRP synthetase family.

It functions in the pathway secondary metabolite biosynthesis. Hybrid PKS-NRPS synthetase; part of the hps1-dma1 gene cluster that probably mediates the biosynthesis a derivative of cyclopiazonic acid (CPA). The hybrid polyketide synthase-nonribosomal peptide synthetase (PKS-NRPS) nps1 might incorporates acetyl-CoA, malonyl-CoA, and tryptophan (Trp) and utilizes a C-terminal redox-incompetent reductase domain to make and release the tryptophan tetramic acid, cyclo-acetoacetyl-L-tryptophan (c-AATrp), as the first intermediate in the pathway. In addition, the cluster also includes the tryptophan dimethylallyltransferase dma1, the FAD-dependent oxidoreductase toxD, the cytochrome P450 monooxygenase cyp3.1 and the methyltransferase DOTSEDRAFT_139328; the latter 2 being not present in all CPA-producing fungi but involved in additional modifications that occur in biosynthesis the of a range of CPA and CPA-like products. Further studies are required to clarify whether the CPA-like hps1-dma1 cluster is functional or a non-functional relic reflecting evolution of D.septosporum. The chain is Hybrid PKS-NRPS synthetase 1 from Dothistroma septosporum (strain NZE10 / CBS 128990) (Red band needle blight fungus).